The chain runs to 401 residues: Adenosine 3'-phospho 5'-phosphosulfate transporter 2 (401 aa).

Residues asparagine 12 and asparagine 71 are each glycosylated (N-linked (GlcNAc...) asparagine). Helical transmembrane passes span 78 to 98 (LTQF…YGYL), 114 to 134 (YLTL…LQLI), 147 to 167 (MIIA…LGYL), 170 to 190 (PTQV…GVFI), 196 to 216 (NVAD…FTLA), and 223 to 243 (NFNL…AVIG). An N-linked (GlcNAc...) asparagine glycan is attached at asparagine 254. The next 4 helical transmembrane spans lie at 267 to 287 (IGFV…PAVT), 298 to 317 (GYAF…VLAL), 324 to 346 (LIAV…IFFA), and 349 to 369 (FTFQ…LNVY).

Belongs to the nucleotide-sugar transporter family. SLC35B subfamily. Preferentially and highly expressed in colon.

It localises to the golgi apparatus membrane. The catalysed reaction is 3'-phosphoadenylyl sulfate(in) + adenosine 3',5'-bisphosphate(out) = 3'-phosphoadenylyl sulfate(out) + adenosine 3',5'-bisphosphate(in). Probably functions as a 3'-phosphoadenylyl sulfate:adenosine 3',5'-bisphosphate antiporter at the Golgi membranes. Mediates the transport from the cytosol into the lumen of the Golgi of 3'-phosphoadenylyl sulfate/adenosine 3'-phospho 5'-phosphosulfate (PAPS), a universal sulfuryl donor for sulfation events that take place in that compartment. In Homo sapiens (Human), this protein is Adenosine 3'-phospho 5'-phosphosulfate transporter 2.